The sequence spans 634 residues: Threonine--tRNA ligase (634 aa).

Residues 1 to 61 (MINIRFPDGS…NSNCELRLIT (61 aa)) enclose the TGS domain. The catalytic stretch occupies residues 241–532 (DHRKIGKVLD…LIEHYAGNLP (292 aa)). Positions 332, 383, and 509 each coordinate Zn(2+).

This sequence belongs to the class-II aminoacyl-tRNA synthetase family. Homodimer. It depends on Zn(2+) as a cofactor.

The protein localises to the cytoplasm. The catalysed reaction is tRNA(Thr) + L-threonine + ATP = L-threonyl-tRNA(Thr) + AMP + diphosphate + H(+). Its function is as follows. Catalyzes the attachment of threonine to tRNA(Thr) in a two-step reaction: L-threonine is first activated by ATP to form Thr-AMP and then transferred to the acceptor end of tRNA(Thr). Also edits incorrectly charged L-seryl-tRNA(Thr). The polypeptide is Threonine--tRNA ligase (Francisella tularensis subsp. holarctica (strain FTNF002-00 / FTA)).